The primary structure comprises 387 residues: GTPase Obg (387 aa).

Residues 1–159 (MKFVDEVEIR…RSLKLELLLL (159 aa)) enclose the Obg domain. The OBG-type G domain maps to 160-333 (ADVGLLGLPN…LTQKVMTFIE (174 aa)). Residues 166–173 (GLPNAGKS), 191–195 (FTTLV), 213–216 (DIPG), 283–286 (NKLD), and 314–316 (SAF) each bind GTP. Positions 173 and 193 each coordinate Mg(2+). Positions 361–387 (AAHSQDDDLDDDDWDEDDYDVEVEYRQ) are disordered. Residues 367–387 (DDLDDDDWDEDDYDVEVEYRQ) are compositionally biased toward acidic residues.

Belongs to the TRAFAC class OBG-HflX-like GTPase superfamily. OBG GTPase family. In terms of assembly, monomer. It depends on Mg(2+) as a cofactor.

It localises to the cytoplasm. In terms of biological role, an essential GTPase which binds GTP, GDP and possibly (p)ppGpp with moderate affinity, with high nucleotide exchange rates and a fairly low GTP hydrolysis rate. Plays a role in control of the cell cycle, stress response, ribosome biogenesis and in those bacteria that undergo differentiation, in morphogenesis control. The polypeptide is GTPase Obg (Colwellia psychrerythraea (strain 34H / ATCC BAA-681) (Vibrio psychroerythus)).